Here is a 233-residue protein sequence, read N- to C-terminus: Ribosome maturation factor RimM (233 aa).

A disordered region spans residues 1-51 (MKRKQDSKGAGSRGQGAGEKKQGAGGRGQGEKKQKKSPVPSPQSPVPDPDE). Residues 11 to 28 (GSRGQGAGEKKQGAGGRG) are compositionally biased toward gly residues. A PRC barrel domain is found at 145 to 226 (GEDEYHVVDL…RIEITPPPGL (82 aa)).

The protein belongs to the RimM family. In terms of assembly, binds ribosomal protein uS19.

Its subcellular location is the cytoplasm. An accessory protein needed during the final step in the assembly of 30S ribosomal subunit, possibly for assembly of the head region. Essential for efficient processing of 16S rRNA. May be needed both before and after RbfA during the maturation of 16S rRNA. It has affinity for free ribosomal 30S subunits but not for 70S ribosomes. The protein is Ribosome maturation factor RimM of Trichormus variabilis (strain ATCC 29413 / PCC 7937) (Anabaena variabilis).